The primary structure comprises 73 residues: Arabinogalactan protein 16 (73 aa).

Residues 1 to 26 (MASRNSVTGFALFSFVFAVILSLAGA) form the signal peptide. Gln-27 carries the pyrrolidone carboxylic acid modification. A 4-hydroxyproline mark is found at Pro-31, Pro-33, and Pro-35. O-linked (Ara...) hydroxyproline glycans are attached at residues Pro-31, Pro-33, and Pro-35. Ser-37 carries GPI-anchor amidated serine lipidation. A propeptide spans 38-73 (DGTSIDQGIAYLLMVVALVLTYLIHPLDASSSYSFF) (removed in mature form).

The protein belongs to the AG-peptide AGP family. Contains 4-hydroxyproline; hydroxylated on Pro-31, Pro-33 and Pro-35. In terms of processing, O-glycosylated on hydroxyprolines; noncontiguous hydroxylproline residues are glycosylated with arabinogalactan. Predominantly expressed in flowers.

It localises to the cell membrane. Proteoglycan that seems to be implicated in diverse developmental roles such as differentiation, cell-cell recognition, embryogenesis and programmed cell death. This is Arabinogalactan protein 16 from Arabidopsis thaliana (Mouse-ear cress).